A 77-amino-acid chain; its full sequence is Exodeoxyribonuclease 7 small subunit (77 aa).

This sequence belongs to the XseB family. Heterooligomer composed of large and small subunits.

It is found in the cytoplasm. The enzyme catalyses Exonucleolytic cleavage in either 5'- to 3'- or 3'- to 5'-direction to yield nucleoside 5'-phosphates.. Functionally, bidirectionally degrades single-stranded DNA into large acid-insoluble oligonucleotides, which are then degraded further into small acid-soluble oligonucleotides. This chain is Exodeoxyribonuclease 7 small subunit, found in Alkaliphilus oremlandii (strain OhILAs) (Clostridium oremlandii (strain OhILAs)).